The sequence spans 251 residues: uncharacterized protein (251 aa).

12 to 21 contributes to the NADP(+) binding site; that stretch reads TGASSQGDIG. Ser148 serves as a coordination point for substrate. Residue Tyr161 is the Proton acceptor of the active site.

Belongs to the short-chain dehydrogenases/reductases (SDR) family.

This is an uncharacterized protein from Bacillus subtilis (strain 168).